We begin with the raw amino-acid sequence, 388 residues long: Na(+)/H(+) antiporter NhaA (388 aa).

11 helical membrane-spanning segments follow: residues 8 to 28, 57 to 77, 93 to 113, 123 to 143, 152 to 172, 175 to 195, 210 to 230, 254 to 274, 278 to 298, 328 to 348, and 361 to 381; these read FFSA…LGLL, LAEF…IAEI, ILPL…YGLI, GWAI…LALG, VWLM…IALF, SHLN…MIGL, GVVL…AGVI, IIAP…SMGM, AMSF…GLFL, LFGL…IAEL, and YGIL…LRFL.

Belongs to the NhaA Na(+)/H(+) (TC 2.A.33) antiporter family.

The protein resides in the cell inner membrane. The catalysed reaction is Na(+)(in) + 2 H(+)(out) = Na(+)(out) + 2 H(+)(in). Na(+)/H(+) antiporter that extrudes sodium in exchange for external protons. The chain is Na(+)/H(+) antiporter NhaA from Zymomonas mobilis subsp. mobilis (strain ATCC 31821 / ZM4 / CP4).